Reading from the N-terminus, the 454-residue chain is Chromosomal replication initiator protein DnaA (454 aa).

Residues 1 to 79 (MSLCLWKQCL…NSPLIKFEIY (79 aa)) form a domain I, interacts with DnaA modulators region. The tract at residues 79-117 (YQIYKENKLKKNIENNNNNKNEKLIWSNIPKFKNLSYRS) is domain II. The tract at residues 118 to 334 (NINKRYNFQN…GALNRVILNS (217 aa)) is domain III, AAA+ region. The ATP site is built by G162, G164, K165, and T166. The domain IV, binds dsDNA stretch occupies residues 335–454 (RFTHRAITVD…FLNLIRTLSK (120 aa)).

The protein belongs to the DnaA family. As to quaternary structure, oligomerizes as a right-handed, spiral filament on DNA at oriC.

It localises to the cytoplasm. In terms of biological role, plays an essential role in the initiation and regulation of chromosomal replication. ATP-DnaA binds to the origin of replication (oriC) to initiate formation of the DNA replication initiation complex once per cell cycle. Binds the DnaA box (a 9 base pair repeat at the origin) and separates the double-stranded (ds)DNA. Forms a right-handed helical filament on oriC DNA; dsDNA binds to the exterior of the filament while single-stranded (ss)DNA is stabiized in the filament's interior. The ATP-DnaA-oriC complex binds and stabilizes one strand of the AT-rich DNA unwinding element (DUE), permitting loading of DNA polymerase. After initiation quickly degrades to an ADP-DnaA complex that is not apt for DNA replication. Binds acidic phospholipids. This chain is Chromosomal replication initiator protein DnaA, found in Buchnera aphidicola subsp. Acyrthosiphon pisum (strain 5A).